The primary structure comprises 725 residues: Antigen peptide transporter 1 (725 aa).

At 1–8 (MAAHAWPT) the chain is on the cytoplasmic side. Residues 9-29 (AALLLLLVDWLLLRPVLPGIF) traverse the membrane as a helical segment. At 30-38 (SLLVPEVPL) the chain is on the lumenal side. Residues 39 to 60 (LRVWAVGLSRWAILGLGVRGVL) form a helical membrane-spanning segment. The Cytoplasmic portion of the chain corresponds to 61-67 (GVTAGAR). A helical membrane pass occupies residues 68 to 88 (GWLAALQPLVAALGLALPGLA). At 89–110 (SFRKLSAWGALREGDNAGLLHW) the chain is on the lumenal side. The chain crosses the membrane as a helical span at residues 111–131 (NSRLDAFVLSYVAALPAAALW). Over 132–163 (HKLGGFWAPSGHKGAGDMLCRMLGFLDSKKGR) the chain is Cytoplasmic. The chain crosses the membrane as a helical span at residues 164–184 (LHLVLVLLILSCLGEMAIPFF). The 284-residue stretch at 164–447 (LHLVLVLLIL…LLSIYPSMQK (284 aa)) folds into the ABC transmembrane type-1 domain. Topologically, residues 185–204 (TGRITDWILQDKTAPSFARN) are lumenal. A helical transmembrane segment spans residues 205-225 (MWLMCILTIASTVLEFAGDGI). At 226–275 (YNITMGHMHSRVHGEVFRAVLHQETGFFLKNPTGSITSRVTEDTSNVCES) the chain is on the cytoplasmic side. Residues 276-296 (ISDKLNLFLWYLGRGLCLLAF) form a helical membrane-spanning segment. The Lumenal portion of the chain corresponds to 297-305 (MIWGSFYLT). Residues 306-326 (VVTLLSLPLLFLLPRRLGKVY) traverse the membrane as a helical segment. At 327–395 (QSLAVKVQES…VTEVWTMSVS (69 aa)) the chain is on the cytoplasmic side. The tract at residues 352–397 (PTVRSFANEEGEAQKFRQKLEEMKPLNKKEALAYVTEVWTMSVSGM) is part of the peptide-binding site. The chain crosses the membrane as a helical span at residues 396–416 (GMLLKVGILYLGGQLVVRGAV). The Lumenal segment spans residues 417–420 (SSGN). The helical transmembrane segment at 421 to 441 (LVSFVLYQLQFTRAVEVLLSI) threads the bilayer. The tract at residues 430 to 464 (QFTRAVEVLLSIYPSMQKSVGASEKIFEYLDRTPC) is part of the peptide-binding site. Topologically, residues 442–725 (YPSMQKSVGA…MVEALAAPSD (284 aa)) are cytoplasmic. An ABC transporter domain is found at 480 to 719 (VKFQDVSFAY…GGCYRSMVEA (240 aa)). ATP is bound by residues 515–523 (GPNGSGKST), 618–624 (NQLSGGQ), and Gln-678. Ser-522 contacts Mg(2+).

It belongs to the ABC transporter superfamily. ABCB family. MHC peptide exporter (TC 3.A.1.209) subfamily. In terms of assembly, heterodimer of TAP1 and TAP2 (TAP1-TAP2). A component of the peptide loading complex (PLC), interacts via TAPBP with MHCI heterodimer; this interaction mediates peptide-MHCI assembly. Interacts with PSMB5 and PSMB8. Requires Mg(2+) as cofactor.

Its subcellular location is the endoplasmic reticulum membrane. It catalyses the reaction a peptide antigen(in) + ATP + H2O = a peptide antigen(out) + ADP + phosphate + H(+). Functionally, ABC transporter associated with antigen processing. In complex with TAP2 mediates unidirectional translocation of peptide antigens from cytosol to endoplasmic reticulum (ER) for loading onto MHC class I (MHCI) molecules. Uses the chemical energy of ATP to export peptides against the concentration gradient. During the transport cycle alternates between 'inward-facing' state with peptide binding site facing the cytosol to 'outward-facing' state with peptide binding site facing the ER lumen. Peptide antigen binding to ATP-loaded TAP1-TAP2 induces a switch to hydrolysis-competent 'outward-facing' conformation ready for peptide loading onto nascent MHCI molecules. Subsequently ATP hydrolysis resets the transporter to the 'inward facing' state for a new cycle. As a component of the peptide loading complex (PLC), acts as a molecular scaffold essential for peptide-MHCI assembly and antigen presentation. This Rattus norvegicus (Rat) protein is Antigen peptide transporter 1 (Tap1).